Here is a 414-residue protein sequence, read N- to C-terminus: 2,3-diketo-5-methylthiopentyl-1-phosphate enolase (414 aa).

K99 functions as the Proton acceptor in the catalytic mechanism. Residues K148, 174 to 177 (KDDE), H265, G338, and 360 to 361 (GG) contribute to the substrate site. Residues K174, D176, and E177 each coordinate Mg(2+). N6-carboxylysine is present on K174.

Belongs to the RuBisCO large chain family. Type IV subfamily. Homodimer. It depends on Mg(2+) as a cofactor.

It catalyses the reaction 5-methylsulfanyl-2,3-dioxopentyl phosphate = 2-hydroxy-5-methylsulfanyl-3-oxopent-1-enyl phosphate. Its pathway is amino-acid biosynthesis; L-methionine biosynthesis via salvage pathway; L-methionine from S-methyl-5-thio-alpha-D-ribose 1-phosphate: step 3/6. Catalyzes the enolization of 2,3-diketo-5-methylthiopentyl-1-phosphate (DK-MTP-1-P) into 2-hydroxy-3-keto-5-methylthiopentenyl-1-phosphate (HK-MTPenyl-1-P). The polypeptide is 2,3-diketo-5-methylthiopentyl-1-phosphate enolase (Bacillus cereus (strain AH187)).